A 292-amino-acid polypeptide reads, in one-letter code: AKT-interacting protein (292 aa).

The disordered stretch occupies residues 1-63 (MNPLWSMSAG…TSPAPAAQST (63 aa)). Residues 14–23 (KRAEGEEKTL) are compositionally biased toward basic and acidic residues. Serine 30 is subject to Phosphoserine. The UBC core domain occupies 74–222 (YLEYSLLAEF…VVDSVKVCTA (149 aa)).

It belongs to the ubiquitin-conjugating enzyme family. FTS subfamily. As to quaternary structure, component of the FTS/Hook/FHIP complex (FHF complex), composed of AKTIP/FTS, FHIP1B, and one or more members of the Hook family of proteins HOOK1, HOOK2, and HOOK3. Interacts directly with HOOK1, HOOK2 and HOOK3. The FHF complex associates with the homotypic vesicular sorting complex (the HOPS complex). Also interacts with AKT1. May interact with FHIP1A. In terms of tissue distribution, ubiquitous. Highest expression in kidney, testis and brain and lowest in spleen and liver.

It is found in the cytoplasm. Its subcellular location is the cell membrane. Functionally, component of the FTS/Hook/FHIP complex (FHF complex). The FHF complex may function to promote vesicle trafficking and/or fusion via the homotypic vesicular protein sorting complex (the HOPS complex). Regulates apoptosis by enhancing phosphorylation and activation of AKT1. Increases release of TNFSF6 via the AKT1/GSK3B/NFATC1 signaling cascade. FHF complex promotes the distribution of AP-4 complex to the perinuclear area of the cell. This chain is AKT-interacting protein (Aktip), found in Mus musculus (Mouse).